The following is a 591-amino-acid chain: Aspartate--tRNA(Asp/Asn) ligase (591 aa).

Residue E174 coordinates L-aspartate. Residues 198-201 are aspartate; sequence QLFK. R220 lines the L-aspartate pocket. ATP-binding positions include 220–222 and Q229; that span reads RDE. L-aspartate is bound at residue H450. E483 provides a ligand contact to ATP. An L-aspartate-binding site is contributed by R490. 535-538 provides a ligand contact to ATP; that stretch reads GLDR.

Belongs to the class-II aminoacyl-tRNA synthetase family. Type 1 subfamily. As to quaternary structure, homodimer.

Its subcellular location is the cytoplasm. It carries out the reaction tRNA(Asx) + L-aspartate + ATP = L-aspartyl-tRNA(Asx) + AMP + diphosphate. Its function is as follows. Aspartyl-tRNA synthetase with relaxed tRNA specificity since it is able to aspartylate not only its cognate tRNA(Asp) but also tRNA(Asn). Reaction proceeds in two steps: L-aspartate is first activated by ATP to form Asp-AMP and then transferred to the acceptor end of tRNA(Asp/Asn). The polypeptide is Aspartate--tRNA(Asp/Asn) ligase (Pseudomonas fluorescens (strain ATCC BAA-477 / NRRL B-23932 / Pf-5)).